The following is a 291-amino-acid chain: ATP synthase gamma chain (291 aa).

It belongs to the ATPase gamma chain family. F-type ATPases have 2 components, CF(1) - the catalytic core - and CF(0) - the membrane proton channel. CF(1) has five subunits: alpha(3), beta(3), gamma(1), delta(1), epsilon(1). CF(0) has three main subunits: a, b and c.

The protein resides in the cell inner membrane. Produces ATP from ADP in the presence of a proton gradient across the membrane. The gamma chain is believed to be important in regulating ATPase activity and the flow of protons through the CF(0) complex. This chain is ATP synthase gamma chain, found in Rhodopseudomonas palustris (strain HaA2).